Consider the following 450-residue polypeptide: Zinc metalloproteinase nas-13 (450 aa).

Positions 1-31 (MPSPTSSSASVFSSHLFFVFCIFSQIAQSYA) are cleaved as a signal peptide. N68 carries N-linked (GlcNAc...) asparagine glycosylation. A Peptidase M12A domain is found at 110–303 (NAVRQTYLKW…YKINMLYNCP (194 aa)). 2 cysteine pairs are disulfide-bonded: C152/C302 and C174/C193. H201 serves as a coordination point for Zn(2+). E202 is a catalytic residue. The Zn(2+) site is built by H205 and H211. N225 is a glycosylation site (N-linked (GlcNAc...) asparagine). The Cell attachment site signature appears at 349–351 (RGD). 6 disulfide bridges follow: C368–C404, C375–C397, C384–C401, C414–C450, C421–C443, and C430–C447. ShKT domains follow at residues 368–404 (CEDRRKDCEFLARAGHCESRFSIRFMTENCANSCGKC) and 414–450 (CEDARTWCERWANSGMCNQTVFKDYMRQKCAKSCNFC). Residue N431 is glycosylated (N-linked (GlcNAc...) asparagine).

Requires Zn(2+) as cofactor.

It localises to the secreted. Functionally, metalloprotease. The chain is Zinc metalloproteinase nas-13 (nas-13) from Caenorhabditis elegans.